Reading from the N-terminus, the 462-residue chain is Phosphoglucosamine mutase (462 aa).

The active-site Phosphoserine intermediate is S112. 4 residues coordinate Mg(2+): S112, D250, D252, and D254. At S112 the chain carries Phosphoserine.

Belongs to the phosphohexose mutase family. The cofactor is Mg(2+). In terms of processing, activated by phosphorylation.

The catalysed reaction is alpha-D-glucosamine 1-phosphate = D-glucosamine 6-phosphate. In terms of biological role, catalyzes the conversion of glucosamine-6-phosphate to glucosamine-1-phosphate. This is Phosphoglucosamine mutase from Parasynechococcus marenigrum (strain WH8102).